Consider the following 392-residue polypeptide: MEGHVKRPMNAFMVWSRGERHKLAQQNPSMQNTEISKQLGCRWKSLTEAEKRPFFQEAQRLKILHREKYPNYKYQPHRRAKVSQRSGILQPAVASTKLYNLLQWDRNPHAITYRQDWSRAAHLYSKNQQSFYWQPVDIPTGHLQQQQQQQQQQQFHNHHQQQQQFYDHHQQQQQQQQQQQQFHDHHQQKQQFHDHHQQQQQFHDHHHHHQEQQFHDHHQQQQQFHDHQQQQQQQQQQQFHDHHQQKQQFHDHHHHQQQQQFHDHQQQQQQFHDHQQQQHQFHDHPQQKQQFHDHPQQQQQFHDHHHQQQQKQQFHDHHQQKQQFHDHHQQKQQFHDHHQQQQQFHDHHQQQQQQQQQQQQQFHDQQLTYLLTADITGWKGIKHCTGPDPEPF.

Residues 4-81 (HVKRPMNAFM…YKYQPHRRAK (78 aa)) form a sufficient for interaction with KPNB1 region. The segment at residues 5 to 73 (VKRPMNAFMV…LHREKYPNYK (69 aa)) is a DNA-binding region (HMG box). 2 required for nuclear localization regions span residues 6–22 (KRPM…ERHK) and 75–81 (QPHRRAK). The tract at residues 52 to 84 (RPFFQEAQRLKILHREKYPNYKYQPHRRAKVSQ) is sufficient for interaction with EP300. K81 is modified (N6-acetyllysine). Positions 92–144 (AVASTKLYNLLQWDRNPHAITYRQDWSRAAHLYSKNQQSFYWQPVDIPTGHLQ) are necessary for interaction with ZNF208 isoform KRAB-O. A necessary for interaction with SLC9A3R2 and nuclear accumulation of SLC9A3R2 region spans residues 94–138 (ASTKLYNLLQWDRNPHAITYRQDWSRAAHLYSKNQQSFYWQPVDI). Positions 142-361 (HLQQQQQQQQ…QQQQQQQQQQ (220 aa)) are disordered. Low complexity predominate over residues 144–181 (QQQQQQQQQQQFHNHHQQQQQFYDHHQQQQQQQQQQQQ). 2 stretches are compositionally biased toward basic and acidic residues: residues 182–197 (FHDH…DHHQ) and 210–228 (QEQQ…HDHQ). The segment covering 229 to 238 (QQQQQQQQQQ) has biased composition (low complexity). Composition is skewed to basic and acidic residues over residues 239-250 (FHDHHQQKQQFH), 261-295 (FHDH…HDHP), and 313-349 (QFHD…DHHQ). Over residues 350–361 (QQQQQQQQQQQQ) the composition is skewed to low complexity.

It belongs to the SRY family. Interacts with KPNB1, ZNF208 isoform KRAB-O, PARP1 and SLC9A3R2. The interaction with KPNB1 is sensitive to dissociation by Ran in the GTP-bound form. Interaction with PARP1 impaired its DNA-binding activity. Interacts with CALM, EP300, HDAC3 and WT1. The interaction with EP300 modulates its DNA-binding activity. Degraded due to the presence of a degron at the C-terminus that promotes its degradation. Post-translationally, phosphorylated on serine residues by PKA. Phosphorylation by PKA enhances its DNA-binding activity and stimulates transcription repression. In terms of processing, acetylation of Lys-81 contributes to its nuclear localization and enhances its interaction with KPNB1. Poly-ADP-ribosylated by PARP1. ADP-ribosylation reduces its DNA-binding activity. As to expression, expressed in gonadal somatic pre-Sertoli cells. Expressed in the substantia nigra of the brain (at protein level). Expressed in diencephalon, cortex, the substantia nigra of the midbrain and the medial mammillary bodies of the hypothalamus of male, but not female. Expressed in gonadal somatic pre-Sertoli cells. While it is expressed at lower level compared to isoform Sry-S, this form is more stable and constitutes the predominant protein product of the Sry locus in XY gonads (at protein level).

It localises to the nucleus speckle. The protein localises to the cytoplasm. Its subcellular location is the nucleus. Transcriptional regulator that controls a genetic switch in male development. It is necessary and sufficient for initiating male sex determination by directing the development of supporting cell precursors (pre-Sertoli cells) as Sertoli rather than granulosa cells. Involved in different aspects of gene regulation including promoter activation or repression. Binds to the DNA consensus sequence 5'-[AT]AACAA[AT]-3'. SRY HMG box recognizes DNA by partial intercalation in the minor groove and promotes DNA bending. Also involved in pre-mRNA splicing. In male adult brain involved in the maintenance of motor functions of dopaminergic neurons. In terms of biological role, constitutes the major isoform, which is necessary and sufficient for initiating male sex determination. Its function is as follows. Constitutes a minor isoform, which is unstable due to the presence of a degron at the C-terminus that promotes its degradation. Not necessary and sufficient for initiating male sex determination. This Mus musculus (Mouse) protein is Sex-determining region Y protein.